The following is a 492-amino-acid chain: 3-octaprenyl-4-hydroxybenzoate carboxy-lyase (492 aa).

Asn-177 contributes to the Mn(2+) binding site. Residues Ile-180–Arg-182, Arg-194–Leu-196, and Arg-199–Gly-200 each bind prenylated FMN. Residue Glu-243 participates in Mn(2+) binding. The Proton donor role is filled by Asp-292.

This sequence belongs to the UbiD family. In terms of assembly, homohexamer. The cofactor is prenylated FMN. It depends on Mn(2+) as a cofactor.

The protein resides in the cell membrane. It catalyses the reaction a 4-hydroxy-3-(all-trans-polyprenyl)benzoate + H(+) = a 2-(all-trans-polyprenyl)phenol + CO2. Its pathway is cofactor biosynthesis; ubiquinone biosynthesis. Catalyzes the decarboxylation of 3-octaprenyl-4-hydroxy benzoate to 2-octaprenylphenol, an intermediate step in ubiquinone biosynthesis. The chain is 3-octaprenyl-4-hydroxybenzoate carboxy-lyase from Neisseria meningitidis serogroup B (strain ATCC BAA-335 / MC58).